A 66-amino-acid chain; its full sequence is MDWLAKYWWILVLVFLVGVLLNVIKDLKRIDHKKFLANKPELPPHRDFNDKWDDEEDWPKKDQPKK.

A helical membrane pass occupies residues 4–24 (LAKYWWILVLVFLVGVLLNVI). Residues 39–66 (KPELPPHRDFNDKWDDEEDWPKKDQPKK) are disordered. Over residues 42–51 (LPPHRDFNDK) the composition is skewed to basic and acidic residues.

Belongs to the UPF0370 family.

It is found in the cell membrane. This Salmonella paratyphi A (strain AKU_12601) protein is UPF0370 protein YpfN.